A 344-amino-acid polypeptide reads, in one-letter code: Dihydroorotate dehydrogenase (quinone) (344 aa).

Residues 65–69 (AGFDK) and Thr-89 contribute to the FMN site. Substrate is bound at residue Lys-69. 114 to 118 (NRMGF) contacts substrate. Asn-145 and Asn-178 together coordinate FMN. Asn-178 lines the substrate pocket. Catalysis depends on Ser-181, which acts as the Nucleophile. Asn-183 serves as a coordination point for substrate. 2 residues coordinate FMN: Lys-215 and Thr-243. 244-245 (NT) serves as a coordination point for substrate. FMN is bound by residues Gly-269, Gly-298, and 319–320 (YT).

It belongs to the dihydroorotate dehydrogenase family. Type 2 subfamily. In terms of assembly, monomer. FMN is required as a cofactor.

It is found in the cell membrane. The catalysed reaction is (S)-dihydroorotate + a quinone = orotate + a quinol. It participates in pyrimidine metabolism; UMP biosynthesis via de novo pathway; orotate from (S)-dihydroorotate (quinone route): step 1/1. Catalyzes the conversion of dihydroorotate to orotate with quinone as electron acceptor. This chain is Dihydroorotate dehydrogenase (quinone), found in Clavibacter michiganensis subsp. michiganensis (strain NCPPB 382).